Reading from the N-terminus, the 281-residue chain is Release factor glutamine methyltransferase (281 aa).

S-adenosyl-L-methionine is bound by residues 121–125 (GSGTG), aspartate 144, and asparagine 188. 188–191 (NPPY) is a substrate binding site.

Belongs to the protein N5-glutamine methyltransferase family. PrmC subfamily.

It catalyses the reaction L-glutaminyl-[peptide chain release factor] + S-adenosyl-L-methionine = N(5)-methyl-L-glutaminyl-[peptide chain release factor] + S-adenosyl-L-homocysteine + H(+). Its function is as follows. Methylates the class 1 translation termination release factors RF1/PrfA and RF2/PrfB on the glutamine residue of the universally conserved GGQ motif. This chain is Release factor glutamine methyltransferase, found in Aquifex aeolicus (strain VF5).